The sequence spans 169 residues: 4-hydroxylaminobenzoate lyase (169 aa).

The protein belongs to the PnbB family.

The enzyme catalyses 4-hydroxylaminobenzoate + H2O + H(+) = 3,4-dihydroxybenzoate + NH4(+). Its function is as follows. Lyase involved in the degradation of nitroaromatic compounds. Catalyzes the conversion of 4-hydroxylaminobenzoate to 3,4-dihydroxybenzoate (protocatechuate). The protein is 4-hydroxylaminobenzoate lyase of Nocardioides sp. (strain LMS-CY).